A 395-amino-acid chain; its full sequence is Tyrosine--tRNA ligase 2 (395 aa).

Residues 42–51 (PTAPDIHLGH) carry the 'HIGH' region motif. Positions 226-230 (KMSKS) match the 'KMSKS' region motif. ATP is bound at residue Lys229. One can recognise an S4 RNA-binding domain in the interval 334-395 (TPMANLLKEA…KRKFARITIA (62 aa)).

This sequence belongs to the class-I aminoacyl-tRNA synthetase family. TyrS type 2 subfamily. Homodimer.

The protein resides in the cytoplasm. It catalyses the reaction tRNA(Tyr) + L-tyrosine + ATP = L-tyrosyl-tRNA(Tyr) + AMP + diphosphate + H(+). Catalyzes the attachment of tyrosine to tRNA(Tyr) in a two-step reaction: tyrosine is first activated by ATP to form Tyr-AMP and then transferred to the acceptor end of tRNA(Tyr). This is Tyrosine--tRNA ligase 2 from Vibrio vulnificus (strain CMCP6).